The chain runs to 274 residues: Thymidylate synthase (274 aa).

Residue Arg21 coordinates dUMP. His51 contributes to the (6R)-5,10-methylene-5,6,7,8-tetrahydrofolate binding site. 123 to 124 contributes to the dUMP binding site; the sequence is RR. The active-site Nucleophile is Cys156. DUMP is bound by residues 176 to 179, Asn187, and 217 to 219; these read RSAD and HIY. (6R)-5,10-methylene-5,6,7,8-tetrahydrofolate is bound at residue Asp179. Position 273 (Ser273) interacts with (6R)-5,10-methylene-5,6,7,8-tetrahydrofolate.

The protein belongs to the thymidylate synthase family. Bacterial-type ThyA subfamily. In terms of assembly, homodimer.

Its subcellular location is the cytoplasm. It carries out the reaction dUMP + (6R)-5,10-methylene-5,6,7,8-tetrahydrofolate = 7,8-dihydrofolate + dTMP. It functions in the pathway pyrimidine metabolism; dTTP biosynthesis. In terms of biological role, catalyzes the reductive methylation of 2'-deoxyuridine-5'-monophosphate (dUMP) to 2'-deoxythymidine-5'-monophosphate (dTMP) while utilizing 5,10-methylenetetrahydrofolate (mTHF) as the methyl donor and reductant in the reaction, yielding dihydrofolate (DHF) as a by-product. This enzymatic reaction provides an intracellular de novo source of dTMP, an essential precursor for DNA biosynthesis. The sequence is that of Thymidylate synthase from Francisella tularensis subsp. holarctica (strain FTNF002-00 / FTA).